A 664-amino-acid polypeptide reads, in one-letter code: Protein-arginine deiminase type-3 (664 aa).

It belongs to the protein arginine deiminase family. Ca(2+) serves as cofactor. Hair follicles, and epidermis at very low levels.

The protein resides in the cytoplasm. The catalysed reaction is L-arginyl-[protein] + H2O = L-citrullyl-[protein] + NH4(+). In terms of biological role, catalyzes the deimination of arginine residues of proteins. This is Protein-arginine deiminase type-3 (PADI3) from Homo sapiens (Human).